A 67-amino-acid polypeptide reads, in one-letter code: Protein AaeX (67 aa).

2 helical membrane-spanning segments follow: residues 3–23 (LFPV…KLLL) and 43–63 (FVWH…YLIS).

This sequence belongs to the AaeX family.

The protein resides in the cell membrane. The sequence is that of Protein AaeX from Salmonella gallinarum (strain 287/91 / NCTC 13346).